Reading from the N-terminus, the 380-residue chain is Cytochrome b (380 aa).

4 consecutive transmembrane segments (helical) span residues 33-53 (FGSLLGLCLAAQILTGLFLAM), 77-98 (WLIRSMHANGASFFFICIYLHI), 113-133 (WNIGVILLLLVMMTAFVGYVL), and 178-198 (FFAFHFLFPFVIAAMTMIHLI). His-83 and His-97 together coordinate heme b. Heme b contacts are provided by His-182 and His-196. His-201 is a binding site for a ubiquinone. Helical transmembrane passes span 226 to 246 (YKDLLGFAILLIALITLALFS), 288 to 308 (LGGVLALLFSILILMLVPVLH), 320 to 340 (FSQFLFWLLVANVAILTWIGG), and 347 to 367 (FIIIGQIASFLYFFIFLILVP).

It belongs to the cytochrome b family. The cytochrome bc1 complex contains 3 respiratory subunits (MT-CYB, CYC1 and UQCRFS1), 2 core proteins (UQCRC1 and UQCRC2) and probably 6 low-molecular weight proteins. Heme b serves as cofactor.

Its subcellular location is the mitochondrion inner membrane. Component of the ubiquinol-cytochrome c reductase complex (complex III or cytochrome b-c1 complex) that is part of the mitochondrial respiratory chain. The b-c1 complex mediates electron transfer from ubiquinol to cytochrome c. Contributes to the generation of a proton gradient across the mitochondrial membrane that is then used for ATP synthesis. In Astronotus ocellatus (Oscar), this protein is Cytochrome b (mt-cyb).